A 410-amino-acid polypeptide reads, in one-letter code: Putative competence-damage inducible protein (410 aa).

Belongs to the CinA family.

The sequence is that of Putative competence-damage inducible protein from Clostridium kluyveri (strain NBRC 12016).